A 317-amino-acid polypeptide reads, in one-letter code: Beta-ketoacyl-[acyl-carrier-protein] synthase III (317 aa).

Residues C112 and H244 contribute to the active site. The segment at 245–249 is ACP-binding; the sequence is QANLR. Residue N274 is part of the active site.

The protein belongs to the thiolase-like superfamily. FabH family. Homodimer.

The protein localises to the cytoplasm. It carries out the reaction malonyl-[ACP] + acetyl-CoA + H(+) = 3-oxobutanoyl-[ACP] + CO2 + CoA. It functions in the pathway lipid metabolism; fatty acid biosynthesis. In terms of biological role, catalyzes the condensation reaction of fatty acid synthesis by the addition to an acyl acceptor of two carbons from malonyl-ACP. Catalyzes the first condensation reaction which initiates fatty acid synthesis and may therefore play a role in governing the total rate of fatty acid production. Possesses both acetoacetyl-ACP synthase and acetyl transacylase activities. Its substrate specificity determines the biosynthesis of branched-chain and/or straight-chain of fatty acids. This is Beta-ketoacyl-[acyl-carrier-protein] synthase III from Salmonella typhi.